A 192-amino-acid chain; its full sequence is Adenylate kinase (192 aa).

12-17 provides a ligand contact to ATP; the sequence is GSGKTT. Residues 34-63 form an NMP region; sequence STGDLLRAEVASGSELGKTIDSFISKGNLV. AMP is bound by residues Thr35, Arg40, 61-63, 88-91, and Gln95; these read NLV and GYPR. The interval 130 to 136 is LID; it reads GRNRGAD. Arg131 serves as a coordination point for ATP. Residues Arg133 and Arg145 each contribute to the AMP site. Arg173 serves as a coordination point for ATP.

It belongs to the adenylate kinase family. Monomer.

It is found in the cytoplasm. It carries out the reaction AMP + ATP = 2 ADP. It functions in the pathway purine metabolism; AMP biosynthesis via salvage pathway; AMP from ADP: step 1/1. In terms of biological role, catalyzes the reversible transfer of the terminal phosphate group between ATP and AMP. Plays an important role in cellular energy homeostasis and in adenine nucleotide metabolism. The sequence is that of Adenylate kinase from Campylobacter jejuni subsp. jejuni serotype O:6 (strain 81116 / NCTC 11828).